The chain runs to 1206 residues: Methionine synthase (1206 aa).

The region spanning 1–314 (MRVTAANQHQ…DHIREVAAAV (314 aa)) is the Hcy-binding domain. 3 residues coordinate Zn(2+): Cys233, Cys299, and Cys300. The Pterin-binding domain occupies 350 to 609 (VLMIGERTNA…IPEEQRQAAL (260 aa)). The B12-binding N-terminal domain maps to 642 to 735 (REAELAKLPL…HMEKSDCDFG (94 aa)). The B12-binding domain occupies 740 to 877 (KGRIVLATVK…SAKRGEALAP (138 aa)). Methylcob(III)alamin contacts are provided by residues 750–754 (GDVHD), His753, Ser798, and Ala856. Positions 873-925 (EALAPGSPESLAAEADRNKETERKARHERSKRIAVQRKAAEEPVEVPERSDVP) are disordered. Basic and acidic residues predominate over residues 886–897 (EADRNKETERKA). Residues 898-907 (RHERSKRIAV) are compositionally biased toward basic residues. The AdoMet activation domain maps to 907–1206 (VQRKAAEEPV…HHPAAKYFNV (300 aa)). Basic and acidic residues predominate over residues 910 to 924 (KAAEEPVEVPERSDV). S-adenosyl-L-methionine is bound by residues Asp954, Arg1149, and 1203–1204 (YF).

This sequence belongs to the vitamin-B12 dependent methionine synthase family. The cofactor is methylcob(III)alamin. Zn(2+) serves as cofactor.

The enzyme catalyses (6S)-5-methyl-5,6,7,8-tetrahydrofolate + L-homocysteine = (6S)-5,6,7,8-tetrahydrofolate + L-methionine. Its pathway is amino-acid biosynthesis; L-methionine biosynthesis via de novo pathway; L-methionine from L-homocysteine (MetH route): step 1/1. Its function is as follows. Catalyzes the transfer of a methyl group from methyl-cobalamin to homocysteine, yielding enzyme-bound cob(I)alamin and methionine. Subsequently, remethylates the cofactor using methyltetrahydrofolate. This Mycobacterium leprae (strain TN) protein is Methionine synthase (metH).